Reading from the N-terminus, the 465-residue chain is UDP-N-acetylmuramoylalanine--D-glutamate ligase (465 aa).

Residue 124-130 coordinates ATP; the sequence is GSDGKTT.

The protein belongs to the MurCDEF family.

Its subcellular location is the cytoplasm. It carries out the reaction UDP-N-acetyl-alpha-D-muramoyl-L-alanine + D-glutamate + ATP = UDP-N-acetyl-alpha-D-muramoyl-L-alanyl-D-glutamate + ADP + phosphate + H(+). The protein operates within cell wall biogenesis; peptidoglycan biosynthesis. Its function is as follows. Cell wall formation. Catalyzes the addition of glutamate to the nucleotide precursor UDP-N-acetylmuramoyl-L-alanine (UMA). The chain is UDP-N-acetylmuramoylalanine--D-glutamate ligase from Ruminiclostridium cellulolyticum (strain ATCC 35319 / DSM 5812 / JCM 6584 / H10) (Clostridium cellulolyticum).